Reading from the N-terminus, the 245-residue chain is Orotidine 5'-phosphate decarboxylase (245 aa).

Substrate is bound by residues Asp-22, Lys-44, 71-80 (DLKFHDIPNT), Thr-131, Arg-192, Gln-201, Gly-221, and Arg-222. The active-site Proton donor is the Lys-73.

This sequence belongs to the OMP decarboxylase family. Type 1 subfamily. Homodimer.

It catalyses the reaction orotidine 5'-phosphate + H(+) = UMP + CO2. Its pathway is pyrimidine metabolism; UMP biosynthesis via de novo pathway; UMP from orotate: step 2/2. Functionally, catalyzes the decarboxylation of orotidine 5'-monophosphate (OMP) to uridine 5'-monophosphate (UMP). This chain is Orotidine 5'-phosphate decarboxylase, found in Escherichia fergusonii (strain ATCC 35469 / DSM 13698 / CCUG 18766 / IAM 14443 / JCM 21226 / LMG 7866 / NBRC 102419 / NCTC 12128 / CDC 0568-73).